Consider the following 194-residue polypeptide: PPE family protein PPE41 (194 aa).

This sequence belongs to the mycobacterial PPE family. Forms a heterodimer with PE25. The dimer forms a 1:1:1 heterotrimeric complex with EspG5. PPE41 interacts directly with EspG5.

It localises to the secreted. The protein resides in the cell surface. Functionally, the PE25/PPE41 dimer induces both a strong humoral and cellular immune response. The dimer induces necrosis, but not apoptosis, in mouse macrophage cells. It also induces activation and maturation of mouse dendritic cells and drives Th2-biased immune responses. The chain is PPE family protein PPE41 from Mycobacterium tuberculosis (strain ATCC 25618 / H37Rv).